Consider the following 488-residue polypeptide: Serine/threonine-protein kinase 32C (488 aa).

The interval 1–56 is disordered; the sequence is MRSGAERRGSSAAAPPSSPPPGRARPAGSDVSPALPPPAASQPRARDAGDARAQPR. 3 positions are modified to phosphoserine: S10, S17, and S18. Low complexity predominate over residues 24-33; it reads ARPAGSDVSP. One can recognise a Protein kinase domain in the interval 94–354; sequence FQILRAIGKG…LQDMQTAPSL (261 aa). ATP is bound by residues 100–108 and K123; that span reads IGKGSFGKV. The active-site Proton acceptor is the D217. Over residues 397 to 406 the composition is skewed to basic residues; the sequence is HKKKKRLAKN. 2 disordered regions span residues 397–420 and 443–488; these read HKKK…QSEN and KRSQ…SGSS.

It belongs to the protein kinase superfamily. Ser/Thr protein kinase family. Requires Mg(2+) as cofactor.

It catalyses the reaction L-seryl-[protein] + ATP = O-phospho-L-seryl-[protein] + ADP + H(+). It carries out the reaction L-threonyl-[protein] + ATP = O-phospho-L-threonyl-[protein] + ADP + H(+). The sequence is that of Serine/threonine-protein kinase 32C from Mus musculus (Mouse).